We begin with the raw amino-acid sequence, 239 residues long: Ribosome assembly factor mrt4 (239 aa).

This sequence belongs to the universal ribosomal protein uL10 family. In terms of assembly, associates with the pre-60S ribosomal particle.

The protein localises to the nucleus. It is found in the nucleolus. It localises to the cytoplasm. Its function is as follows. Component of the ribosome assembly machinery. Nuclear paralog of the ribosomal protein P0, it binds pre-60S subunits at an early stage of assembly in the nucleolus, and is replaced by P0 in cytoplasmic pre-60S subunits and mature 80S ribosomes. The polypeptide is Ribosome assembly factor mrt4 (Candida glabrata (strain ATCC 2001 / BCRC 20586 / JCM 3761 / NBRC 0622 / NRRL Y-65 / CBS 138) (Yeast)).